We begin with the raw amino-acid sequence, 233 residues long: UPF0502 protein Mpe_A1449 (233 aa).

It belongs to the UPF0502 family.

This Methylibium petroleiphilum (strain ATCC BAA-1232 / LMG 22953 / PM1) protein is UPF0502 protein Mpe_A1449.